The sequence spans 230 residues: V-type proton ATPase subunit E (230 aa).

This sequence belongs to the V-ATPase E subunit family. As to quaternary structure, V-ATPase is a heteromultimeric enzyme composed of a peripheral catalytic V1 complex (components A to H) attached to an integral membrane V0 proton pore complex (components: a, c, c', c'' and d).

Subunit of the peripheral V1 complex of vacuolar ATPase essential for assembly or catalytic function. V-ATPase is responsible for acidifying a variety of intracellular compartments in eukaryotic cells. This chain is V-type proton ATPase subunit E (VATE), found in Citrus limon (Lemon).